Consider the following 1387-residue polypeptide: Kinesin-like protein KIF15 (1387 aa).

The tract at residues Met1 to Glu23 is disordered. Over residues Arg10 to Asn22 the composition is skewed to polar residues. Residues Ala26–Ile363 enclose the Kinesin motor domain. ATP is bound at residue Gly109–Thr116. The stretch at Val368–Met1132 forms a coiled coil. Ser568 carries the post-translational modification Phosphoserine. Lys1009 is subject to N6-acetyllysine. Ser1141 and Ser1169 each carry phosphoserine.

It belongs to the TRAFAC class myosin-kinesin ATPase superfamily. Kinesin family. KLP2 subfamily. Interacts with MKI67 and TPX2. Expressed in brain (neurons in the external germinal layer of the cerebellum and in ventricular zones) (at protein level). Expressed in spleen and testis.

Its subcellular location is the cytoplasm. It localises to the cytoskeleton. The protein resides in the spindle. In terms of biological role, plus-end directed kinesin-like motor enzyme involved in mitotic spindle assembly. This chain is Kinesin-like protein KIF15 (Kif15), found in Mus musculus (Mouse).